The primary structure comprises 102 residues: Small ribosomal subunit protein uS10 (102 aa).

Belongs to the universal ribosomal protein uS10 family. As to quaternary structure, part of the 30S ribosomal subunit.

Functionally, involved in the binding of tRNA to the ribosomes. In Mycoplasma mycoides subsp. mycoides SC (strain CCUG 32753 / NCTC 10114 / PG1), this protein is Small ribosomal subunit protein uS10.